The following is a 947-amino-acid chain: Valine--tRNA ligase (947 aa).

The short motif at 45–55 is the 'HIGH' region element; sequence PNVTGSLHMGH. The 'KMSKS' region motif lies at 591-595; that stretch reads KMSKS. Lys-594 is an ATP binding site.

It belongs to the class-I aminoacyl-tRNA synthetase family. ValS type 1 subfamily. Monomer.

It localises to the cytoplasm. The enzyme catalyses tRNA(Val) + L-valine + ATP = L-valyl-tRNA(Val) + AMP + diphosphate. Catalyzes the attachment of valine to tRNA(Val). As ValRS can inadvertently accommodate and process structurally similar amino acids such as threonine, to avoid such errors, it has a 'posttransfer' editing activity that hydrolyzes mischarged Thr-tRNA(Val) in a tRNA-dependent manner. The polypeptide is Valine--tRNA ligase (Rhizobium meliloti (strain 1021) (Ensifer meliloti)).